Reading from the N-terminus, the 261-residue chain is Putative phosphite transport system permease protein HtxE (261 aa).

Positions 47-253 (EATTETVEVL…VFVFVLDQLQ (207 aa)) constitute an ABC transmembrane type-1 domain. 3 helical membrane passes run 122-142 (LIVA…GVLA), 203-220 (RNLR…GGIG), and 229-249 (MFQY…VFVL).

It belongs to the binding-protein-dependent transport system permease family.

It localises to the cell inner membrane. Probably forms part of a binding-protein-dependent hypophosphite transporter. This Stutzerimonas stutzeri (Pseudomonas stutzeri) protein is Putative phosphite transport system permease protein HtxE (htxE).